A 166-amino-acid polypeptide reads, in one-letter code: Lithostathine-1-beta (166 aa).

Positions 1 to 22 (MAQTNSFFMLISSLMFLSLSQG) are cleaved as a signal peptide. O-linked (GalNAc...) threonine glycosylation occurs at T27. The C-type lectin domain occupies 34 to 164 (ISCPEGTNAY…EKKFSFVCKF (131 aa)). Intrachain disulfides connect C36–C47, C64–C162, and C137–C154.

In terms of processing, all O-linked glycans consist of Gal-GlcNAc-Gal-GalNAc tetrasaccharide core and get elongated (microheterogeneity).

It is found in the secreted. Functionally, might act as an inhibitor of spontaneous calcium carbonate precipitation. May be associated with neuronal sprouting in brain, and with brain and pancreas regeneration. The sequence is that of Lithostathine-1-beta (REG1B) from Homo sapiens (Human).